A 446-amino-acid polypeptide reads, in one-letter code: tRNA modification GTPase MnmE (446 aa).

The (6S)-5-formyl-5,6,7,8-tetrahydrofolate site is built by Arg23, Glu81, and Lys120. In terms of domain architecture, TrmE-type G spans 216–370 (GFKVAIIGKP…LIKELELILD (155 aa)). Asn226 is a binding site for K(+). GTP contacts are provided by residues 226 to 231 (NVGKSS), 245 to 251 (SDIAGTT), and 270 to 273 (DTAG). Residue Ser230 participates in Mg(2+) binding. Residues Ser245, Ile247, and Thr250 each coordinate K(+). Thr251 contacts Mg(2+). Residue Lys446 coordinates (6S)-5-formyl-5,6,7,8-tetrahydrofolate.

It belongs to the TRAFAC class TrmE-Era-EngA-EngB-Septin-like GTPase superfamily. TrmE GTPase family. Homodimer. Heterotetramer of two MnmE and two MnmG subunits. It depends on K(+) as a cofactor.

The protein resides in the cytoplasm. Exhibits a very high intrinsic GTPase hydrolysis rate. Involved in the addition of a carboxymethylaminomethyl (cmnm) group at the wobble position (U34) of certain tRNAs, forming tRNA-cmnm(5)s(2)U34. The sequence is that of tRNA modification GTPase MnmE from Aliarcobacter butzleri (strain RM4018) (Arcobacter butzleri).